The chain runs to 153 residues: DNA gyrase inhibitor (153 aa).

It belongs to the DNA gyrase inhibitor family. In terms of assembly, interacts with DNA gyrase.

It is found in the cytoplasm. In terms of biological role, inhibits the supercoiling activity of DNA gyrase. Acts by inhibiting DNA gyrase at an early step, prior to (or at the step of) binding of DNA by the gyrase. It protects cells against toxins that target DNA gyrase, by inhibiting activity of these toxins and reducing the formation of lethal double-strand breaks in the cell. In Pantoea sp. (strain At-9b), this protein is DNA gyrase inhibitor.